The primary structure comprises 507 residues: ATP synthase subunit alpha, chloroplastic (507 aa).

170–177 (GDRQTGKT) is an ATP binding site.

The protein belongs to the ATPase alpha/beta chains family. As to quaternary structure, F-type ATPases have 2 components, CF(1) - the catalytic core - and CF(0) - the membrane proton channel. CF(1) has five subunits: alpha(3), beta(3), gamma(1), delta(1), epsilon(1). CF(0) has four main subunits: a, b, b' and c.

The protein resides in the plastid. It is found in the chloroplast thylakoid membrane. It catalyses the reaction ATP + H2O + 4 H(+)(in) = ADP + phosphate + 5 H(+)(out). Functionally, produces ATP from ADP in the presence of a proton gradient across the membrane. The alpha chain is a regulatory subunit. The polypeptide is ATP synthase subunit alpha, chloroplastic (Marchantia polymorpha (Common liverwort)).